Here is a 260-residue protein sequence, read N- to C-terminus: Intermembrane phospholipid transport system permease protein MlaE (260 aa).

At Met1 to Asn50 the chain is on the cytoplasmic side. A helical transmembrane segment spans residues Val51 to Gly71. Over Leu72–Gly88 the chain is Periplasmic. A helical membrane pass occupies residues Met89 to Ala109. Over Gly110–Arg147 the chain is Cytoplasmic. The helical transmembrane segment at Phe148–Trp168 threads the bilayer. Topologically, residues Gly169–Asp198 are periplasmic. Residues Leu199 to Phe219 traverse the membrane as a helical segment. Residues Asn220–Thr238 are Cytoplasmic-facing. A helical membrane pass occupies residues Val239–Gly259. Position 260 (Asn260) is a topological domain, periplasmic.

The protein belongs to the MlaE permease family. As to quaternary structure, the complex is composed of two ATP-binding proteins (MlaF), two transmembrane proteins (MlaE), two cytoplasmic solute-binding proteins (MlaB) and six periplasmic solute-binding proteins (MlaD).

The protein resides in the cell inner membrane. Functionally, part of the ABC transporter complex MlaFEDB, which is involved in a phospholipid transport pathway that maintains lipid asymmetry in the outer membrane by retrograde trafficking of phospholipids from the outer membrane to the inner membrane. Probably responsible for the translocation of the substrate across the membrane. In Escherichia coli O157:H7, this protein is Intermembrane phospholipid transport system permease protein MlaE.